Here is a 446-residue protein sequence, read N- to C-terminus: Elongation factor 1-alpha (446 aa).

One can recognise a tr-type G domain in the interval 5-230 (KNHLNLVVIG…DALDQPKRPK (226 aa)). The tract at residues 14–21 (GHVDSGKS) is G1. A GTP-binding site is contributed by 14–21 (GHVDSGKS). Positions 70-74 (GITID) are G2. The interval 91–94 (DAPG) is G3. GTP contacts are provided by residues 91–95 (DAPGH) and 153–156 (NKMD). The tract at residues 153-156 (NKMD) is G4. A G5 region spans residues 194 to 196 (SGW).

Belongs to the TRAFAC class translation factor GTPase superfamily. Classic translation factor GTPase family. EF-Tu/EF-1A subfamily.

It is found in the cytoplasm. Functionally, this protein promotes the GTP-dependent binding of aminoacyl-tRNA to the A-site of ribosomes during protein biosynthesis. This Stylonychia lemnae (Ciliate) protein is Elongation factor 1-alpha (EFAA).